A 501-amino-acid chain; its full sequence is Capsid protein (501 aa).

The interval 78–98 is disordered; sequence SEEGFPVEPKTEEKDIPSTSG. The Nuclear localization signal signature appears at 122 to 125; that stretch reads KRGF. The CCHC-type zinc-finger motif lies at 431–448; the sequence is CKCWICHEEGHYANECPK.

The protein belongs to the caulimoviridae capsid protein family. Interacts (via nuclear localization signal) with host importin alpha.

Its subcellular location is the virion. The protein localises to the host nucleus. Functionally, self assembles to form an icosahedral capsid, about 50 nm in diameter, nm, composed of 420 subunits of the viral capsid protein. The capsid encapsulates the genomic dsDNA. Following virus entry into host cell, provides nuclear import of the viral genome. Virus particles do not enter the nucleus, but dock at the nuclear membrane through the interaction with host importins. The sequence is that of Capsid protein from Cestrum parqui (CmYLCV).